The following is an 896-amino-acid chain: Isoleucine--tRNA ligase (896 aa).

The short motif at 57-67 is the 'HIGH' region element; that stretch reads PYANNNIHIGH. Residue Glu543 coordinates L-isoleucyl-5'-AMP. The 'KMSKS' region motif lies at 584–588; it reads KMSKS. Lys587 provides a ligand contact to ATP. Zn(2+)-binding residues include Cys869, Cys872, Cys885, and Cys888.

This sequence belongs to the class-I aminoacyl-tRNA synthetase family. IleS type 1 subfamily. As to quaternary structure, monomer. Requires Zn(2+) as cofactor.

It is found in the cytoplasm. The catalysed reaction is tRNA(Ile) + L-isoleucine + ATP = L-isoleucyl-tRNA(Ile) + AMP + diphosphate. In terms of biological role, catalyzes the attachment of isoleucine to tRNA(Ile). As IleRS can inadvertently accommodate and process structurally similar amino acids such as valine, to avoid such errors it has two additional distinct tRNA(Ile)-dependent editing activities. One activity is designated as 'pretransfer' editing and involves the hydrolysis of activated Val-AMP. The other activity is designated 'posttransfer' editing and involves deacylation of mischarged Val-tRNA(Ile). The protein is Isoleucine--tRNA ligase of Acholeplasma laidlawii (strain PG-8A).